Consider the following 481-residue polypeptide: Aspartyl/glutamyl-tRNA(Asn/Gln) amidotransferase subunit B (481 aa).

The protein belongs to the GatB/GatE family. GatB subfamily. Heterotrimer of A, B and C subunits.

The enzyme catalyses L-glutamyl-tRNA(Gln) + L-glutamine + ATP + H2O = L-glutaminyl-tRNA(Gln) + L-glutamate + ADP + phosphate + H(+). The catalysed reaction is L-aspartyl-tRNA(Asn) + L-glutamine + ATP + H2O = L-asparaginyl-tRNA(Asn) + L-glutamate + ADP + phosphate + 2 H(+). Allows the formation of correctly charged Asn-tRNA(Asn) or Gln-tRNA(Gln) through the transamidation of misacylated Asp-tRNA(Asn) or Glu-tRNA(Gln) in organisms which lack either or both of asparaginyl-tRNA or glutaminyl-tRNA synthetases. The reaction takes place in the presence of glutamine and ATP through an activated phospho-Asp-tRNA(Asn) or phospho-Glu-tRNA(Gln). The chain is Aspartyl/glutamyl-tRNA(Asn/Gln) amidotransferase subunit B from Pseudomonas syringae pv. syringae (strain B728a).